We begin with the raw amino-acid sequence, 579 residues long: Capsid vertex component 2 (579 aa).

The interval 1 to 50 is interaction with major capsid protein/MCP; that stretch reads MTARYGFGSISFPNKCGIFLSTTKNFIAPNFPIHYWTAPAFELRGRMNPD.

The protein belongs to the herpesviridae CVC2 protein family. In terms of assembly, heterodimerizes with CVC1. Interacts with major capsid protein/MCP and triplex capsid protein 1/TRX1 at the pentamer vertices. Interacts with the large tegument protein/LTP.

It localises to the virion. Its subcellular location is the host nucleus. In terms of biological role, capsid vertex-specific component that plays a role during viral DNA encapsidation, assuring correct genome cleavage and presumably stabilizing capsids that contain full-length viral genomes. Participates in the interaction between the capsid and the tegument through interaction with the large tegument protein/LTP. This Homo sapiens (Human) protein is Capsid vertex component 2.